A 90-amino-acid polypeptide reads, in one-letter code: Barrier-to-autointegration factor B (90 aa).

It belongs to the BAF family. As to quaternary structure, homodimer. Interacts with nemp1a and nemp1b.

The protein resides in the nucleus. It is found in the chromosome. It localises to the nucleus envelope. The protein localises to the cytoplasm. In terms of biological role, non-specific DNA-binding protein that plays key roles in mitotic nuclear reassembly, chromatin organization, DNA damage response, gene expression and intrinsic immunity against foreign DNA. Contains two non-specific double-stranded DNA (dsDNA)-binding sites which promote DNA cross-bridging. Plays a key role in nuclear membrane reformation at the end of mitosis by driving formation of a single nucleus in a spindle-independent manner. Transiently cross-bridges anaphase chromosomes via its ability to bridge distant DNA sites, leading to the formation of a dense chromatin network at the chromosome ensemble surface that limits membranes to the surface. Also acts as a negative regulator of innate immune activation by restricting CGAS activity toward self-DNA upon acute loss of nuclear membrane integrity. Outcompetes CGAS for DNA-binding, thereby preventing CGAS activation and subsequent damaging autoinflammatory responses. Also involved in DNA damage response; acts by inhibiting the ADP-ribosyltransferase activity of PARP1. Involved in the recognition of exogenous dsDNA in the cytosol: associates with exogenous dsDNA immediately after its appearance in the cytosol at endosome breakdown and is required to avoid autophagy. The polypeptide is Barrier-to-autointegration factor B (banf1-b) (Xenopus laevis (African clawed frog)).